The sequence spans 162 residues: Caveolin-2 (162 aa).

At Met-1 to Lys-86 the chain is on the cytoplasmic side. Tyr-19 carries the post-translational modification Phosphotyrosine; by SRC. Phosphoserine occurs at positions 20 and 23. Tyr-27 carries the post-translational modification Phosphotyrosine; by SRC. Residues Phe-87–Leu-107 constitute an intramembrane region (helical). Residues Ser-108–Asp-162 lie on the Cytoplasmic side of the membrane.

The protein belongs to the caveolin family. Monomer or homodimer. Interacts with CAV1; the interaction forms a stable heterooligomeric complex that is required for targeting to lipid rafts and for caveolae formation. Tyrosine phosphorylated forms do not form heterooligomers with the Tyr-19-phosphorylated form existing as a monomer or dimer, and the Tyr-27-form as a monomer only. Interacts (tyrosine phosphorylated form) with the SH2 domain-containing proteins, RASA1, NCK1 and SRC. Interacts (tyrosine phosphorylated form) with INSR, the interaction (Tyr-27-phosphorylated form) is increased on insulin stimulation. Interacts (Tyr-19 phosphorylated form) with MAPK1 (phosphorylated form); the interaction, promoted by insulin, leads to nuclear location and MAPK1 activation. Interacts with STAT3; the interaction is increased on insulin-induced tyrosine phosphorylation leading to STAT activation. In terms of processing, phosphorylated on serine and tyrosine residues. CAV1 promotes phosphorylation on Ser-23 which then targets the complex to the plasma membrane, lipid rafts and caveolae. Phosphorylation on both Tyr-19 and Tyr-27 is required for insulin-induced 'Ser-727' phosphorylation of STAT3 and its activation. Phosphorylation on Tyr-19 is required for insulin-induced phosphorylation of MAPK1 and DNA binding of STAT3. Tyrosine phosphorylation is induced by both EGF and insulin.

It localises to the nucleus. The protein localises to the cytoplasm. Its subcellular location is the golgi apparatus membrane. The protein resides in the cell membrane. It is found in the membrane. It localises to the caveola. Functionally, may act as a scaffolding protein within caveolar membranes. Interacts directly with G-protein alpha subunits and can functionally regulate their activity. Acts as an accessory protein in conjunction with CAV1 in targeting to lipid rafts and driving caveolae formation. Positive regulator of cellular mitogenesis of the MAPK signaling pathway. Required for the insulin-stimulated nuclear translocation and activation of MAPK1 and STAT3, and the subsequent regulation of cell cycle progression. The sequence is that of Caveolin-2 (CAV2) from Equus caballus (Horse).